Reading from the N-terminus, the 385-residue chain is MEVKVKKRVVVGLSGGVDSSVSALLLKQEGYEVIGLFMSNWDTIANFENNHEFNKTHQGCESELDYQDAQAVAQKIGIPLYRVEFIKEYWDNVFEYFLSEYQKNRTPNPDILCNQFIKFDSFLNYAKNELQADYIAMGHYARVKHDRNSSFLLKAIDTNKDQTYFLCNLNQNQLQNVLFPIGHLTKLQVRAIAKKHGLITANKKDSTGICFIGERNFKTFLQNYIPNQPGQIINIVNNQIIGHHIGTMYYTIGQRKGLNLGGMNERMFVCDKDIDKKIIYVAPSSFEKQYLISTQALIENINFIEPYNPQIPIMVRFRHRQDLIIVNDFLPIKNTKNVLINYESARAITPGQYAVFYQNDHCIGGGIVSKTNIGHQKVDFLVYKS.

ATP contacts are provided by residues 12–19 (GLSGGVDS) and methionine 38. The interval 108-110 (NPD) is interaction with target base in tRNA. The active-site Nucleophile is cysteine 113. Cysteine 113 and cysteine 210 form a disulfide bridge. Glycine 138 is a binding site for ATP. The segment at 160 to 162 (KDQ) is interaction with tRNA. The Cysteine persulfide intermediate role is filled by cysteine 210.

The protein belongs to the MnmA/TRMU family.

Its subcellular location is the cytoplasm. It catalyses the reaction S-sulfanyl-L-cysteinyl-[protein] + uridine(34) in tRNA + AH2 + ATP = 2-thiouridine(34) in tRNA + L-cysteinyl-[protein] + A + AMP + diphosphate + H(+). Its function is as follows. Catalyzes the 2-thiolation of uridine at the wobble position (U34) of tRNA, leading to the formation of s(2)U34. The polypeptide is tRNA-specific 2-thiouridylase MnmA (Ureaplasma parvum serovar 3 (strain ATCC 27815 / 27 / NCTC 11736)).